The chain runs to 352 residues: MGPHPAVAAIRLAVRRVLHDILTELNTPAGVPAATAVERTPERAPGLPTAPLVLVACSGGADSMALASALAFEAPRLGVRAGGVTVDHGLQSGSDLRAEEVVLRLRELGLDPVEATAVTVGRAGGPEAAARDARYAALDAAAARHGAAAVLLGHTRDDQAETVLLGLARGSGIRSLSGMAAVSGAGGRYRRPFLQVDRQTARKACMVQSLPVWDDPHNADPAYTRSRLRHEGLPALEKALGKGVVEALARTAQLSRDDADALDTWARQAEAGVRDATGGLECAKLYALPPAVRRRILRRAALEAGAPGGALFARHIEEVDRLITGWRGQGAINLPGKVVARRQGGRLVIRQG.

58-63 (SGGADS) provides a ligand contact to ATP.

It belongs to the tRNA(Ile)-lysidine synthase family.

It localises to the cytoplasm. It carries out the reaction cytidine(34) in tRNA(Ile2) + L-lysine + ATP = lysidine(34) in tRNA(Ile2) + AMP + diphosphate + H(+). Ligates lysine onto the cytidine present at position 34 of the AUA codon-specific tRNA(Ile) that contains the anticodon CAU, in an ATP-dependent manner. Cytidine is converted to lysidine, thus changing the amino acid specificity of the tRNA from methionine to isoleucine. This chain is tRNA(Ile)-lysidine synthase, found in Streptomyces coelicolor (strain ATCC BAA-471 / A3(2) / M145).